The primary structure comprises 28 residues: Cruzioseptin-3 (28 aa).

Gln25 is subject to Glutamine amide. The propeptide occupies 27–28 (EQ).

Expressed by the skin glands.

The protein localises to the secreted. Has antimicrobial activity against Gram-negative bacterium E.coli (MIC=13.32 uM), against Gram-positive bacterium S.aureus (MIC=13.32 uM) and against fungus C.albicans (MIC=13.32 uM). At higher concentrations also has a bactericidal and fungicidal effect. Has hemagglutinating activity against horse erythrocytes. The sequence is that of Cruzioseptin-3 from Cruziohyla calcarifer (Splendid leaf frog).